A 476-amino-acid chain; its full sequence is Stromelysin-2 (476 aa).

The signal sequence occupies residues 1–17; sequence MMHLAFLVLLCLPVCSA. A propeptide spans 18-98 (activation peptide); sequence YPLSGAAKEE…PRCGVPDVGH (81 aa). The Cysteine switch signature appears at 89–96; sequence PRCGVPDV. The Zn(2+) site is built by cysteine 91, histidine 167, aspartate 169, histidine 182, histidine 195, and histidine 217. The active site involves glutamate 218. Positions 221 and 227 each coordinate Zn(2+). Hemopexin repeat units follow at residues 286–335, 336–382, 384–432, and 433–476; these read PAKC…WPSL, PSYL…GFPP, IRKI…FPGV, and EPKV…WLHC. Cysteine 289 and cysteine 476 form a disulfide bridge.

The protein belongs to the peptidase M10A family. Zn(2+) is required as a cofactor. It depends on Ca(2+) as a cofactor.

The protein localises to the secreted. Its subcellular location is the extracellular space. It localises to the extracellular matrix. The enzyme catalyses Similar to stromelysin 1, but action on collagen types III, IV and V is weak.. In terms of biological role, can degrade fibronectin, gelatins of type I, III, IV, and V; weakly collagens III, IV, and V. Activates procollagenase. This Homo sapiens (Human) protein is Stromelysin-2 (MMP10).